The primary structure comprises 304 residues: Acetyl-coenzyme A carboxylase carboxyl transferase subunit beta (304 aa).

The CoA carboxyltransferase N-terminal domain maps to Val23 to Val292. Positions 27, 30, 46, and 49 each coordinate Zn(2+). The segment at Cys27 to Cys49 adopts a C4-type zinc-finger fold. The tract at residues Asn284–Ala304 is disordered. Pro residues predominate over residues Pro295–Ala304.

This sequence belongs to the AccD/PCCB family. As to quaternary structure, acetyl-CoA carboxylase is a heterohexamer composed of biotin carboxyl carrier protein (AccB), biotin carboxylase (AccC) and two subunits each of ACCase subunit alpha (AccA) and ACCase subunit beta (AccD). Zn(2+) serves as cofactor.

Its subcellular location is the cytoplasm. It catalyses the reaction N(6)-carboxybiotinyl-L-lysyl-[protein] + acetyl-CoA = N(6)-biotinyl-L-lysyl-[protein] + malonyl-CoA. It functions in the pathway lipid metabolism; malonyl-CoA biosynthesis; malonyl-CoA from acetyl-CoA: step 1/1. In terms of biological role, component of the acetyl coenzyme A carboxylase (ACC) complex. Biotin carboxylase (BC) catalyzes the carboxylation of biotin on its carrier protein (BCCP) and then the CO(2) group is transferred by the transcarboxylase to acetyl-CoA to form malonyl-CoA. The sequence is that of Acetyl-coenzyme A carboxylase carboxyl transferase subunit beta from Shigella boydii serotype 4 (strain Sb227).